Here is a 1230-residue protein sequence, read N- to C-terminus: Basic-leucine zipper transcription factor A (1230 aa).

Disordered regions lie at residues leucine 65–asparagine 108, leucine 180–glutamine 233, glutamine 270–glutamine 310, and histidine 422–aspartate 578. Low complexity-rich tracts occupy residues asparagine 69–asparagine 108, asparagine 192–glutamine 233, glutamine 270–proline 287, proline 295–glutamine 310, and histidine 422–histidine 447. Polar residues-rich tracts occupy residues lysine 448–proline 458 and threonine 466–glycine 475. Low complexity predominate over residues serine 476 to serine 503. Residues proline 523–histidine 537 are compositionally biased toward basic residues. Positions phenylalanine 541 to glutamate 554 are enriched in acidic residues. The region spanning aspartate 555 to aspartate 618 is the bZIP domain. The tract at residues lysine 556–lysine 586 is basic motif. The span at arginine 562 to asparagine 571 shows a compositional bias: polar residues. The interval leucine 590 to leucine 604 is leucine-zipper. The stretch at leucine 728–isoleucine 753 forms a coiled coil. Disordered regions lie at residues threonine 772–lysine 869 and asparagine 1025–isoleucine 1230. Composition is skewed to low complexity over residues asparagine 774 to proline 803 and asparagine 810 to asparagine 831. Residues serine 832–glycine 845 are compositionally biased toward basic residues. The span at asparagine 1025–asparagine 1042 shows a compositional bias: polar residues. 2 stretches are compositionally biased toward low complexity: residues asparagine 1052–asparagine 1146 and glutamine 1153–serine 1193.

This sequence belongs to the bZIP family. As to quaternary structure, binds DNA as a dimer. Heterodimerizes with dimB; in vitro. Also able to form homodimer; in vitro.

The protein resides in the nucleus. Functionally, transcriptional regulator involved in DIF-1 signaling. DIF-1 (Differentiation Inducing Factor-1) is a signal molecule involved in the differentiation of pstO (prestalk-O) cells. Functions both as an activator of prestalk gene expression and a repressor of prespore gene expression. This is Basic-leucine zipper transcription factor A (dimA) from Dictyostelium discoideum (Social amoeba).